Reading from the N-terminus, the 660-residue chain is Arginine--tRNA ligase, cytoplasmic (660 aa).

Met-1 bears the N-acetylmethionine mark. The tract at residues 1–72 (MDGLVAQCSA…QEERRKPTKN (72 aa)) is could be involved in the assembly of the multisynthetase complex. Residues 200–202 (SPN), His-211, Tyr-384, Asp-388, and Gln-412 each bind L-arginine. The 'HIGH' region motif lies at 201–212 (PNIAKEMHVGHL). An interaction with tRNA region spans residues 529–543 (NTAAYLLYAFTRIRS).

The protein belongs to the class-I aminoacyl-tRNA synthetase family. As to quaternary structure, interacts (via N-terminus) with AIMP1 (via N-terminus); this stimulates its catalytic activity. Interacts (via N-terminus) with LARS2 (via C-terminus). Monomer. Part of a multisubunit complex that groups tRNA ligases for Arg (RARS1), Asp (DARS1), Gln (QARS1), Ile (IARS1), Leu (LARS1), Lys (KARS1), Met (MARS1) the bifunctional ligase for Glu and Pro (EPRS1) and the auxiliary subunits AIMP1/p43, AIMP2/p38 and EEF1E1/p18. Interacts with QARS1. Part of a complex composed of RARS1, QARS1 and AIMP1.

The protein localises to the cytoplasm. It localises to the cytosol. It carries out the reaction tRNA(Arg) + L-arginine + ATP = L-arginyl-tRNA(Arg) + AMP + diphosphate. In terms of biological role, forms part of a macromolecular complex that catalyzes the attachment of specific amino acids to cognate tRNAs during protein synthesis. Modulates the secretion of AIMP1 and may be involved in generation of the inflammatory cytokine EMAP2 from AIMP1. The sequence is that of Arginine--tRNA ligase, cytoplasmic (Rars1) from Mus musculus (Mouse).